Reading from the N-terminus, the 472-residue chain is Methanethiol oxidase (472 aa).

Belongs to the selenium-binding protein family.

The protein localises to the nucleus. It is found in the cytoplasm. It localises to the cytosol. Its subcellular location is the membrane. The enzyme catalyses methanethiol + O2 + H2O = hydrogen sulfide + formaldehyde + H2O2 + H(+). The protein operates within organosulfur degradation. In terms of biological role, catalyzes the oxidation of methanethiol, an organosulfur compound known to be produced in substantial amounts by gut bacteria. Selenium-binding protein which may be involved in the sensing of reactive xenobiotics in the cytoplasm. May be involved in intra-Golgi protein transport. The polypeptide is Methanethiol oxidase (selenbp1) (Xenopus tropicalis (Western clawed frog)).